Consider the following 247-residue polypeptide: Ribonuclease 3 (247 aa).

The RNase III domain maps to 21–149 (VDHQPLLDHL…LFGAIFRQHG (129 aa)). Residue E62 participates in Mg(2+) binding. D66 is a catalytic residue. Mg(2+) contacts are provided by D135 and E138. E138 is an active-site residue. The 69-residue stretch at 176-244 (DWKTTLQEEL…AHQAFRKLRE (69 aa)) folds into the DRBM domain.

The protein belongs to the ribonuclease III family. In terms of assembly, homodimer. Requires Mg(2+) as cofactor.

The protein resides in the cytoplasm. It carries out the reaction Endonucleolytic cleavage to 5'-phosphomonoester.. In terms of biological role, digests double-stranded RNA. Involved in the processing of primary rRNA transcript to yield the immediate precursors to the large and small rRNAs (23S and 16S). Processes some mRNAs, and tRNAs when they are encoded in the rRNA operon. Processes pre-crRNA and tracrRNA of type II CRISPR loci if present in the organism. The chain is Ribonuclease 3 from Corynebacterium glutamicum (strain ATCC 13032 / DSM 20300 / JCM 1318 / BCRC 11384 / CCUG 27702 / LMG 3730 / NBRC 12168 / NCIMB 10025 / NRRL B-2784 / 534).